A 257-amino-acid chain; its full sequence is Phosphomannomutase (257 aa).

The active-site Nucleophile is D19. The Mg(2+) site is built by D19 and D21. The active-site Proton donor/acceptor is the D21. Alpha-D-mannose 1-phosphate is bound by residues R28, R133, R144, R151, S189, and D191. Mg(2+)-binding residues include D219, F231, D233, and T236.

It belongs to the eukaryotic PMM family. Homodimer.

It is found in the cytoplasm. The enzyme catalyses alpha-D-mannose 1-phosphate = D-mannose 6-phosphate. It functions in the pathway nucleotide-sugar biosynthesis; GDP-alpha-D-mannose biosynthesis; alpha-D-mannose 1-phosphate from D-fructose 6-phosphate: step 2/2. Its function is as follows. Involved in the synthesis of the GDP-mannose and dolichol-phosphate-mannose required for a number of critical mannosyl transfer reactions. The protein is Phosphomannomutase (pmm1) of Schizosaccharomyces pombe (strain 972 / ATCC 24843) (Fission yeast).